The following is a 288-amino-acid chain: MTTIIDGKQIAKDLNAQTATRVAALKKRDIVPGLAVIVVGDDPASAIYVRNKHKKALKLGIKSVVRELPATTTQAELTQIVMAYNVDPTIHGILVQSPLPAGLDEQAIVAAIDPQKDVDGFHPLNVGRLFANLPGKYPVSCTPRGIMTMLATLPMHLRGKRAVVVGRSLIVGRPMAAMLLNADMTVSVAHVHTQHLSDLTRTADVLVVATGVTHLIKATDVKPGAVVIDVGMDRDENGKLTGDVDFDNVAPRVAAITPVPGGVGPMTIATLMQQTVDLCEWSEQRGNN.

166 to 168 (GRS) serves as a coordination point for NADP(+).

Belongs to the tetrahydrofolate dehydrogenase/cyclohydrolase family. As to quaternary structure, homodimer.

It carries out the reaction (6R)-5,10-methylene-5,6,7,8-tetrahydrofolate + NADP(+) = (6R)-5,10-methenyltetrahydrofolate + NADPH. It catalyses the reaction (6R)-5,10-methenyltetrahydrofolate + H2O = (6R)-10-formyltetrahydrofolate + H(+). Its pathway is one-carbon metabolism; tetrahydrofolate interconversion. In terms of biological role, catalyzes the oxidation of 5,10-methylenetetrahydrofolate to 5,10-methenyltetrahydrofolate and then the hydrolysis of 5,10-methenyltetrahydrofolate to 10-formyltetrahydrofolate. This chain is Bifunctional protein FolD, found in Levilactobacillus brevis (strain ATCC 367 / BCRC 12310 / CIP 105137 / JCM 1170 / LMG 11437 / NCIMB 947 / NCTC 947) (Lactobacillus brevis).